Reading from the N-terminus, the 609-residue chain is Glutamine--fructose-6-phosphate aminotransferase [isomerizing] (609 aa).

Cysteine 2 (nucleophile; for GATase activity) is an active-site residue. The region spanning 2 to 217 (CGIVGAIAGR…EGDTAELRRD (216 aa)) is the Glutamine amidotransferase type-2 domain. SIS domains are found at residues 284-425 (TADA…LQGR) and 458-599 (WAER…VDKP). Lysine 604 functions as the For Fru-6P isomerization activity in the catalytic mechanism.

As to quaternary structure, homodimer.

The protein resides in the cytoplasm. It catalyses the reaction D-fructose 6-phosphate + L-glutamine = D-glucosamine 6-phosphate + L-glutamate. Its function is as follows. Catalyzes the first step in hexosamine metabolism, converting fructose-6P into glucosamine-6P using glutamine as a nitrogen source. The polypeptide is Glutamine--fructose-6-phosphate aminotransferase [isomerizing] (Xanthomonas campestris pv. campestris (strain ATCC 33913 / DSM 3586 / NCPPB 528 / LMG 568 / P 25)).